The chain runs to 452 residues: Glycoprotein endo-alpha-1,2-mannosidase-like protein (452 aa).

Topologically, residues 1-8 (MARRRRRA) are cytoplasmic. Residues 9-29 (CIALFLVLLFAFGTLMGLRTL) traverse the membrane as a helical; Signal-anchor for type II membrane protein segment. The Lumenal portion of the chain corresponds to 30-452 (KAPDGLPALG…FIKEKEQWLM (423 aa)). Residues 40 to 90 (PGPELAPFERRPEGNPAPARAPAAPAAPPPPPPRTAAPRASLGPAEADPAP) are disordered. Over residues 64-74 (PAAPPPPPPRT) the composition is skewed to pro residues.

It belongs to the glycosyl hydrolase 99 family.

It is found in the golgi apparatus membrane. The protein is Glycoprotein endo-alpha-1,2-mannosidase-like protein (Maneal) of Mus musculus (Mouse).